The primary structure comprises 126 residues: Large ribosomal subunit protein bL12 (126 aa).

Belongs to the bacterial ribosomal protein bL12 family. In terms of assembly, homodimer. Part of the ribosomal stalk of the 50S ribosomal subunit. Forms a multimeric L10(L12)X complex, where L10 forms an elongated spine to which 2 to 4 L12 dimers bind in a sequential fashion. Binds GTP-bound translation factors.

Its function is as follows. Forms part of the ribosomal stalk which helps the ribosome interact with GTP-bound translation factors. Is thus essential for accurate translation. The polypeptide is Large ribosomal subunit protein bL12 (Rhizorhabdus wittichii (strain DSM 6014 / CCUG 31198 / JCM 15750 / NBRC 105917 / EY 4224 / RW1) (Sphingomonas wittichii)).